The following is a 567-amino-acid chain: Dihydrolipoyllysine-residue acetyltransferase component of pyruvate dehydrogenase complex (567 aa).

Lipoyl-binding domains follow at residues 2–75 (SKQI…LVLE) and 108–181 (IVEV…MRFE). N6-lipoyllysine is present on residues lysine 41 and lysine 147. Over residues 192 to 238 (SAPASTSAPQTAAPATTAQAPQAAAPDTTAQAPQAAAPDTTAQAAQS) the composition is skewed to low complexity. A disordered region spans residues 192 to 249 (SAPASTSAPQTAAPATTAQAPQAAAPDTTAQAPQAAAPDTTAQAAQSNNNVSGLSQEQ). Polar residues predominate over residues 239-249 (NNNVSGLSQEQ). In terms of domain architecture, Peripheral subunit-binding (PSBD) spans 258 to 295 (HATPVIRRLAREFGVNLDKVKGTGRKGRIVKEDIEAYV). Catalysis depends on residues cysteine 484, histidine 540, and aspartate 544.

Belongs to the 2-oxoacid dehydrogenase family. Forms a 24-polypeptide structural core with octahedral symmetry. It depends on (R)-lipoate as a cofactor.

The catalysed reaction is N(6)-[(R)-dihydrolipoyl]-L-lysyl-[protein] + acetyl-CoA = N(6)-[(R)-S(8)-acetyldihydrolipoyl]-L-lysyl-[protein] + CoA. Functionally, the pyruvate dehydrogenase complex catalyzes the overall conversion of pyruvate to acetyl-CoA and CO(2). It contains multiple copies of three enzymatic components: pyruvate dehydrogenase (E1), dihydrolipoamide acetyltransferase (E2) and lipoamide dehydrogenase (E3). The protein is Dihydrolipoyllysine-residue acetyltransferase component of pyruvate dehydrogenase complex (aceF) of Haemophilus influenzae (strain ATCC 51907 / DSM 11121 / KW20 / Rd).